Reading from the N-terminus, the 343-residue chain is Protein SOSEKI 4 (343 aa).

The segment at 18 to 109 (RIVPVVYYLS…YVLKGSQILD (92 aa)) is DIX-like oligomerization domain. The interval 148–194 (RKLSMDASTQTDDRRRRKSPVDEVNEVTELSREEITSPPQSDSSPET) is disordered. Residues 184 to 194 (SPPQSDSSPET) are compositionally biased toward polar residues. Positions 233–234 (CG) match the Association to cell membranes motif.

This sequence belongs to the SOSEKI family. As to quaternary structure, homodimer. Forms long polymer filaments with other SOKs proteins polymers (e.g. SOK1, SOK2, SOK3 and SOK4) crucial for polar localization and biological activity. Binds to ANGUSTIFOLIA (AN). As to expression, expressed during embryogenesis and in roots.

The protein resides in the cell membrane. Its function is as follows. SOSEKI proteins (SOK1-5) locally interpret global polarity cues and can influence cell division orientation to coordinate cell polarization relative to body axes, probably by guiding ANGUSTIFOLIA (AN) polarized localization. Positive regulator of auxin (indole-3-acetic acid, IAA) biosynthesis and signaling pathway leading to the modulation of seedling growth, plant and inflorescence development. Negative regulator of stress responses (e.g. salinity and osmotic stress). This is Protein SOSEKI 4 from Arabidopsis thaliana (Mouse-ear cress).